The primary structure comprises 764 residues: Serine/threonine-protein kinase MPS1 (764 aa).

Disordered regions lie at residues 66 to 95, 197 to 216, and 258 to 316; these read EEMD…SSHS, ELPL…RNTD, and QAAL…KSSI. Low complexity predominate over residues 85–95; it reads TSGHTSTSSHS. Positions 201 to 216 are enriched in basic and acidic residues; that stretch reads EDSHQTNFKETKRNTD. 2 stretches are compositionally biased toward low complexity: residues 272–292 and 306–315; these read KSRS…KDNS and STGSSSSKSS. In terms of domain architecture, Protein kinase spans 440 to 720; sequence YEKIELLGRG…LSSTFLQPFM (281 aa). ATP contacts are provided by residues 446–454 and K468; that span reads LGRGGSSRV. D563 acts as the Proton acceptor in catalysis.

The protein belongs to the protein kinase superfamily. Ser/Thr protein kinase family. Autophosphorylated.

It catalyses the reaction L-seryl-[protein] + ATP = O-phospho-L-seryl-[protein] + ADP + H(+). The enzyme catalyses L-threonyl-[protein] + ATP = O-phospho-L-threonyl-[protein] + ADP + H(+). It carries out the reaction L-tyrosyl-[protein] + ATP = O-phospho-L-tyrosyl-[protein] + ADP + H(+). In terms of biological role, involved in mitotic spindle assembly checkpoint signaling, a process that delays anaphase until chromosomes are bioriented on the spindle, and in the repair of incorrect mitotic kinetochore-spindle microtubule attachments. Phosphorylates SPC105 on MELT motifs; phosphorylation is required for recruitment of the BUB1-BUB3 complex to kinetochores. Phosphorylates CNN1, which contributes to the enrichment of CNN1 on anaphase kinetochores. Implicated in spindle pole body (SPD) duplication. Phosphorylates the SPC29 and SPC110 spindle pole body components. The sequence is that of Serine/threonine-protein kinase MPS1 (MPS1) from Saccharomyces cerevisiae (strain ATCC 204508 / S288c) (Baker's yeast).